The following is a 395-amino-acid chain: S-adenosylmethionine synthase (395 aa).

Histidine 18 contacts ATP. Aspartate 20 lines the Mg(2+) pocket. Position 46 (glutamate 46) interacts with K(+). Residues glutamate 59 and glutamine 103 each coordinate L-methionine. Residues 103–113 (QSADIAVGVDS) form a flexible loop region. ATP contacts are provided by residues 170 to 172 (DAK), 235 to 236 (KF), aspartate 244, 250 to 251 (RK), alanine 267, and lysine 271. Aspartate 244 contributes to the L-methionine binding site. Lysine 275 is a binding site for L-methionine.

The protein belongs to the AdoMet synthase family. As to quaternary structure, homotetramer; dimer of dimers. Mg(2+) serves as cofactor. Requires K(+) as cofactor.

It is found in the cytoplasm. It carries out the reaction L-methionine + ATP + H2O = S-adenosyl-L-methionine + phosphate + diphosphate. It participates in amino-acid biosynthesis; S-adenosyl-L-methionine biosynthesis; S-adenosyl-L-methionine from L-methionine: step 1/1. Functionally, catalyzes the formation of S-adenosylmethionine (AdoMet) from methionine and ATP. The overall synthetic reaction is composed of two sequential steps, AdoMet formation and the subsequent tripolyphosphate hydrolysis which occurs prior to release of AdoMet from the enzyme. The chain is S-adenosylmethionine synthase from Granulibacter bethesdensis (strain ATCC BAA-1260 / CGDNIH1).